A 434-amino-acid polypeptide reads, in one-letter code: Alpha-enolase (434 aa).

An N-acetylserine modification is found at Ser2. Position 5 is an N6-acetyllysine (Lys5). Ser27 is subject to Phosphoserine. Position 40 (Ser40) interacts with Mg(2+). Tyr44 is modified (phosphotyrosine). Lys60 carries the post-translational modification N6-acetyllysine; alternate. An N6-succinyllysine; alternate modification is found at Lys60. Residues Lys64 and Lys71 each carry the N6-acetyllysine modification. At Lys89 the chain carries N6-acetyllysine; alternate. Position 89 is an N6-succinyllysine; alternate (Lys89). Lys92 and Lys126 each carry N6-acetyllysine. Residues His158 and Glu167 each contribute to the substrate site. 2 positions are modified to N6-acetyllysine: Lys193 and Lys199. Lys202 carries the N6-acetyllysine; alternate modification. A Glycyl lysine isopeptide (Lys-Gly) (interchain with G-Cter in SUMO2); alternate cross-link involves residue Lys202. Catalysis depends on Glu210, which acts as the Proton donor. 2 positions are modified to N6-acetyllysine; alternate: Lys228 and Lys233. Lys228 bears the N6-succinyllysine; alternate mark. Lys228 is modified (N6-(2-hydroxyisobutyryl)lysine; alternate). At Lys233 the chain carries N6-malonyllysine; alternate. Asp245 serves as a coordination point for Mg(2+). Ser254 bears the Phosphoserine mark. An N6-acetyllysine modification is found at Lys256. A phosphoserine mark is found at Ser263 and Ser272. At Lys281 the chain carries N6-acetyllysine; alternate. Lys281 is modified (N6-(2-hydroxyisobutyryl)lysine; alternate). At Lys285 the chain carries N6-acetyllysine. Residue Tyr287 is modified to Phosphotyrosine. Ser291 carries the phosphoserine modification. Residues Glu293 and Asp318 each contribute to the Mg(2+) site. The substrate site is built by Glu293 and Asp318. 2 positions are modified to N6-acetyllysine: Lys335 and Lys343. Residue Lys343 is the Proton acceptor of the active site. Substrate-binding positions include 370-373 and Lys394; that span reads SHRS. The segment at 405-434 is required for interaction with PLG; it reads AKYNQLLRIEEELGSKAKFAGRNFRNPLAK. Lys406 carries the N6-acetyllysine modification. Lys420 carries the post-translational modification N6-acetyllysine; alternate. Position 420 is an N6-succinyllysine; alternate (Lys420). Lys420 is modified (N6-malonyllysine; alternate).

Belongs to the enolase family. Mammalian enolase is composed of 3 isozyme subunits, alpha, beta and gamma, which can form homodimers or heterodimers which are cell-type and development-specific. ENO1 interacts with PLG in the neuronal plasma membrane and promotes its activation. The C-terminal lysine is required for this binding. Interacts with ENO4 and PGAM2. Interacts with CMTM6. The cofactor is Mg(2+). Post-translationally, ISGylated. Lysine 2-hydroxyisobutyrylation (Khib) by p300/EP300 activates the phosphopyruvate hydratase activity.

The protein resides in the cytoplasm. It localises to the cell membrane. The enzyme catalyses (2R)-2-phosphoglycerate = phosphoenolpyruvate + H2O. It participates in carbohydrate degradation; glycolysis; pyruvate from D-glyceraldehyde 3-phosphate: step 4/5. Functionally, glycolytic enzyme the catalyzes the conversion of 2-phosphoglycerate to phosphoenolpyruvate. In addition to glycolysis, involved in various processes such as growth control, hypoxia tolerance and allergic responses. May also function in the intravascular and pericellular fibrinolytic system due to its ability to serve as a receptor and activator of plasminogen on the cell surface of several cell-types such as leukocytes and neurons. Stimulates immunoglobulin production. The polypeptide is Alpha-enolase (ENO1) (Macaca fascicularis (Crab-eating macaque)).